The following is a 1403-amino-acid chain: DNA-directed RNA polymerase subunit beta' (1403 aa).

Positions 71, 73, 86, and 89 each coordinate Zn(2+). Mg(2+)-binding residues include aspartate 462, aspartate 464, and aspartate 466. Cysteine 811, cysteine 885, cysteine 892, and cysteine 895 together coordinate Zn(2+).

This sequence belongs to the RNA polymerase beta' chain family. As to quaternary structure, the RNAP catalytic core consists of 2 alpha, 1 beta, 1 beta' and 1 omega subunit. When a sigma factor is associated with the core the holoenzyme is formed, which can initiate transcription. The cofactor is Mg(2+). Requires Zn(2+) as cofactor.

The enzyme catalyses RNA(n) + a ribonucleoside 5'-triphosphate = RNA(n+1) + diphosphate. Functionally, DNA-dependent RNA polymerase catalyzes the transcription of DNA into RNA using the four ribonucleoside triphosphates as substrates. The chain is DNA-directed RNA polymerase subunit beta' from Bartonella tribocorum (strain CIP 105476 / IBS 506).